The primary structure comprises 115 residues: Large ribosomal subunit protein bL20 (115 aa).

Belongs to the bacterial ribosomal protein bL20 family.

Its function is as follows. Binds directly to 23S ribosomal RNA and is necessary for the in vitro assembly process of the 50S ribosomal subunit. It is not involved in the protein synthesizing functions of that subunit. This is Large ribosomal subunit protein bL20 from Prochlorococcus marinus subsp. pastoris (strain CCMP1986 / NIES-2087 / MED4).